Reading from the N-terminus, the 151-residue chain is Zinc finger HIT domain-containing protein 3 (151 aa).

Cys-11, Cys-14, Cys-22, Cys-25, Cys-30, Cys-34, His-38, and Cys-42 together coordinate Zn(2+). The HIT-type zinc-finger motif lies at 11–42 (CVVCLEKPKYRCPTCRVPYCSVPCFQKHKEQC). Basic and acidic residues predominate over residues 43–53 (SSEARPVEKRR). The interval 43–81 (SSEARPVEKRRAGPPVRSEESKDDDSSVADFLNSDEEED) is disordered. Acidic residues predominate over residues 63–81 (SKDDDSSVADFLNSDEEED). Position 76 is a phosphoserine (Ser-76).

As to quaternary structure, thyroid receptor interacting proteins (TRIPs) specifically interact with the ligand binding domain of the thyroid receptor (TR). Requires the presence of thyroid hormone for its interaction. Interacts with NUFIP1. Interacts (via HIT-type zinc finger) with the RUVBL1/RUVBL2 complex in the presence of ADP. Expressed in the cerebellum.

The protein localises to the cytoplasm. It is found in the nucleus. The chain is Zinc finger HIT domain-containing protein 3 (Znhit3) from Mus musculus (Mouse).